A 109-amino-acid polypeptide reads, in one-letter code: Large ribosomal subunit protein P1 (109 aa).

A disordered region spans residues Ala71–Gly109. Positions Ala80 to Pro95 are enriched in basic and acidic residues. Tandem repeats lie at residues Lys81–Pro85, Lys86–Pro90, and Lys91–Pro95. Positions Lys81–Pro95 are 3 X 5 AA tandem repeats of K-K-E-E-P. The segment covering Lys96 to Gly109 has biased composition (acidic residues).

This sequence belongs to the eukaryotic ribosomal protein P1/P2 family. Post-translationally, not phosphorylated.

This chain is Large ribosomal subunit protein P1 (RPLP1), found in Tetrahymena thermophila.